Here is a 115-residue protein sequence, read N- to C-terminus: Yop proteins translocation protein M (115 aa).

The interval 19–38 (HGGQAGRLTETNPLTENSHQ) is disordered. Residues 27–38 (TETNPLTENSHQ) show a composition bias toward polar residues.

Functionally, belongs to an operon involved in the translocation of Yop proteins across the bacterial membranes or in the specific control of this function. The protein is Yop proteins translocation protein M (yscM) of Yersinia pestis.